Here is a 52-residue protein sequence, read N- to C-terminus: Insulin (52 aa).

Disulfide bonds link C7–C38, C19–C51, and C37–C42.

Belongs to the insulin family. As to quaternary structure, heterodimer of a B chain and an A chain linked by two disulfide bonds.

Its subcellular location is the secreted. Its function is as follows. Insulin decreases blood glucose concentration. It increases cell permeability to monosaccharides, amino acids and fatty acids. It accelerates glycolysis, the pentose phosphate cycle, and glycogen synthesis in liver. The chain is Insulin (ins) from Amia calva (Bowfin).